We begin with the raw amino-acid sequence, 529 residues long: Heat shock factor protein 1 (529 aa).

Met-1 carries the N-acetylmethionine modification. The interval 15-120 is DNA-binding domain; that stretch reads VPAFLTKLWT…LLENIKRKVT (106 aa). Lys-80 carries the N6-acetyllysine modification. Lys-91 bears the N6-acetyllysine; alternate mark. A Glycyl lysine isopeptide (Lys-Gly) (interchain with G-Cter in SUMO2); alternate cross-link involves residue Lys-91. Residue Lys-118 is modified to N6-acetyllysine. Ser-121 carries the phosphoserine; by MAPKAPK2 modification. Residues Lys-126 and Lys-131 each participate in a glycyl lysine isopeptide (Lys-Gly) (interchain with G-Cter in SUMO2) cross-link. Positions 130-203 are hydrophobic repeat HR-A/B; sequence IKIRQDSVTK…ISLVQSNRIL (74 aa). A Phosphothreonine; by CK2 modification is found at Thr-142. Residues Lys-150 and Lys-188 each carry the N6-acetyllysine modification. A d domain region spans residues 203–224; the sequence is LGVKRKIPLMLNDSGSAHSMPK. An N6-acetyllysine; alternate modification is found at Lys-208. Lys-208 is covalently cross-linked (Glycyl lysine isopeptide (Lys-Gly) (interchain with G-Cter in SUMO2); alternate). Ser-216 is subject to Phosphoserine; by PLK1. The tract at residues 221 to 310 is regulatory domain; the sequence is SMPKYSRQFS…PPSPPQSPRV (90 aa). Lys-224 is covalently cross-linked (Glycyl lysine isopeptide (Lys-Gly) (interchain with G-Cter in SUMO2)). Phosphoserine; by CAMK2A is present on Ser-230. A phosphoserine mark is found at Ser-275 and Ser-292. The interval 295–324 is disordered; that stretch reads VRVKEEPPSPPQSPRVEEASPGRPSSVDTL. Lys-298 carries the post-translational modification N6-acetyllysine; alternate. Residue Lys-298 forms a Glycyl lysine isopeptide (Lys-Gly) (interchain with G-Cter in SUMO2); alternate linkage. Lys-298 is covalently cross-linked (Glycyl lysine isopeptide (Lys-Gly) (interchain with G-Cter in SUMO); alternate). Ser-303 is modified (phosphoserine; by GSK3-beta). The residue at position 307 (Ser-307) is a Phosphoserine; by MAPK3. Phosphoserine occurs at positions 314 and 319. A Phosphoserine; by PKA modification is found at Ser-320. Position 323 is a phosphothreonine (Thr-323). Ser-326 bears the Phosphoserine; by MAPK12 mark. Residues 336–372 are disordered; it reads RESEPAPASVTALTDARGHTDTEGRPPSPPPTSTPEK. Ser-344 is subject to Phosphoserine. Ser-363 is subject to Phosphoserine; by MAPK8. The tract at residues 371–529 is transactivation domain; the sequence is EKCLSVACLD…PPKAKDPTVS (159 aa). Residues 384-409 form a hydrophobic repeat HR-C region; it reads LSDHLDAMDSNLDNLQTMLSSHGFSV. A 9aaTAD motif is present at residues 412–420; sequence SALLDLFSP. Residue Ser-419 is modified to Phosphoserine; by PLK1. A Phosphoserine modification is found at Ser-444. Disordered regions lie at residues 444 to 463 and 502 to 529; these read SPQE…DSGK and EGDG…PTVS. Residue Lys-524 is modified to N6-acetyllysine.

Belongs to the HSF family. In terms of assembly, monomer; cytoplasmic latent and transcriptionally inactive monomeric form in unstressed cells. Homotrimer; in response to stress, such as heat shock, homotrimerizes and translocates into the nucleus, binds to heat shock element (HSE) sequences in promoter of heat shock protein (HSP) genes and acquires transcriptional ability. Interacts (via monomeric form) with FKBP4; this interaction occurs in unstressed cells. Associates (via monomeric form) with HSP90 proteins in a multichaperone complex in unnstressed cell; this association maintains HSF1 in a non-DNA-binding and transcriptional inactive form by preventing HSF1 homotrimerization. Homotrimeric transactivation activity is modulated by protein-protein interactions and post-translational modifications. Interacts with HSP90AA1; this interaction is decreased in a IER5-dependent manner, promoting HSF1 accumulation in the nucleus, homotrimerization and DNA-binding activities. Part (via regulatory domain in the homotrimeric form) of a large heat shock-induced HSP90-dependent multichaperone complex at least composed of FKBP4, FKBP5, HSP90 proteins, PPID, PPP5C and PTGES3; this association maintains the HSF1 homotrimeric DNA-bound form in a transcriptionally inactive form. Interacts with BAG3 (via BAG domain); this interaction occurs in normal and heat-shocked cells promoting nuclear shuttling of HSF1 in a BAG3-dependent manner. Interacts (via homotrimeric and hyperphosphorylated form) with FKBP4; this interaction occurs upon heat shock in a HSP90-dependent multichaperone complex. Interacts (via homotrimeric form preferentially) with EEF1A proteins. In heat shocked cells, stress-denatured proteins compete with HSF1 homotrimeric DNA-bound form for association of the HSP90-dependent multichaperone complex, and hence alleviating repression of HSF1-mediated transcriptional activity. Interacts (via homotrimeric form preferentially) with DAXX; this interaction relieves homotrimeric HSF1 from repression of its transcriptional activity by HSP90-dependent multichaperone complex upon heat shock. Interacts (via D domain and preferentially with hyperphosphorylated form) with JNK1; this interaction occurs under both normal growth conditions and immediately upon heat shock. Interacts (via D domain and preferentially with hyperphosphorylated form) with MAPK3; this interaction occurs upon heat shock. Interacts with IER5 (via central region); this interaction promotes PPP2CA-induced dephosphorylation on Ser-121, Ser-307, Ser-314, Thr-323 and Thr-367 and HSF1 transactivation activity. Found in a ribonucleoprotein complex composed of the HSF1 homotrimeric form, translation elongation factor eEF1A proteins and non-coding RNA heat shock RNA-1 (HSR1); this complex occurs upon heat shock and stimulates HSF1 DNA-binding activity. Interacts (via transactivation domain) with HSPA1A/HSP70 and DNAJB1; these interactions result in the inhibition of heat shock- and HSF1-induced transcriptional activity during the attenuation and recovery phase from heat shock. Interacts (via Ser-303 and Ser-307 phosphorylated form) with YWHAE; this interaction promotes HSF1 sequestration in the cytoplasm in an ERK-dependent manner. Found in a complex with IER5 and PPP2CA. Interacts with TPR; this interaction increases upon heat shock and stimulates export of HSP70 mRNA. Interacts with SYMPK (via N-terminus) and CSTF2; these interactions occur upon heat shock. Interacts (via transactivation domain) with HSPA8. Interacts with EEF1D; this interaction occurs at heat shock promoter element (HSE) sequences. Interacts with MAPKAPK2. Interacts with PRKACA/PKA. Interacts (via transactivation domain) with GTF2A2. Interacts (via transactivation domain) with GTF2B. Interacts (via transactivation domain) with TBP. Interacts with CDK9, CCNT1 and EP300. Interacts (via N-terminus) with XRCC5 (via N-terminus) and XRCC6 (via N-terminus); these interactions are direct and prevent XRCC5/XRCC6 heterodimeric binding and non-homologous end joining (NHEJ) repair activities induced by ionizing radiation (IR). Interacts with PLK1; this interaction occurs during the early mitotic period, increases upon heat shock but does not modulate neither HSF1 homotrimerization and DNA-binding activities. Interacts (via Ser-216 phosphorylated form) with CDC20; this interaction occurs in mitosis in a MAD2L1-dependent manner and prevents PLK1-stimulated degradation of HSF1 by blocking the recruitment of the SCF(BTRC) ubiquitin ligase complex. Interacts with MAD2L1; this interaction occurs in mitosis. Interacts with BTRC; this interaction occurs during mitosis, induces its ubiquitin-dependent degradation following stimulus-dependent phosphorylation at Ser-216, a process inhibited by CDC20. Interacts with HSP90AA1 and HSP90AB1. Forms a complex with TTC5/STRAP and p300/EP300; these interactions augment chromatin-bound HSF1 and p300/EP300 histone acetyltransferase activity. Phosphorylated. Phosphorylated in unstressed cells; this phosphorylation is constitutive and implicated in the repression of HSF1 transcriptional activity. Phosphorylated on Ser-121 by MAPKAPK2; this phosphorylation promotes interaction with HSP90 proteins and inhibits HSF1 homotrimerization, DNA-binding and transactivation activities. Phosphorylation on Ser-303 by GSK3B/GSK3-beta and on Ser-307 by MAPK3 within the regulatory domain is involved in the repression of HSF1 transcriptional activity and occurs in a RAF1-dependent manner. Phosphorylation on Ser-303 and Ser-307 increases HSF1 nuclear export in a YWHAE- and XPO1/CRM1-dependent manner. Phosphorylation on Ser-307 is a prerequisite for phosphorylation on Ser-303. According to PubMed:9535852, Ser-303 is not phosphorylated in unstressed cells. Phosphorylated on Ser-419 by PLK1; phosphorylation promotes nuclear translocation upon heat shock. Hyperphosphorylated upon heat shock and during the attenuation and recovery phase period of the heat shock response. Phosphorylated on Thr-142; this phosphorylation increases HSF1 transactivation activity upon heat shock. Phosphorylation on Ser-230 by CAMK2A; this phosphorylation enhances HSF1 transactivation activity upon heat shock. Phosphorylation on Ser-326 by MAPK12; this phosphorylation enhances HSF1 nuclear translocation, homotrimerization and transactivation activities upon heat shock. Phosphorylated on Ser-320 by PRKACA/PKA; this phosphorylation promotes nuclear localization and transcriptional activity upon heat shock. Phosphorylated on Ser-363 by MAPK8; this phosphorylation occurs upon heat shock, induces HSF1 translocation into nuclear stress bodies and negatively regulates transactivation activity. Neither basal nor stress-inducible phosphorylation on Ser-230, Ser-292, Ser-303, Ser-307, Ser-314, Ser-319, Ser-320, Thr-323, Ser-326, Ser-338, Ser-344, Ser-363, Thr-367, Ser-368 and Thr-369 within the regulatory domain is involved in the regulation of HSF1 subcellular localization or DNA-binding activity; however, it negatively regulates HSF1 transactivation activity. Phosphorylated on Ser-216 by PLK1 in the early mitotic period; this phosphorylation regulates HSF1 localization to the spindle pole, the recruitment of the SCF(BTRC) ubiquitin ligase complex inducing HSF1 degradation, and hence mitotic progression. Dephosphorylated on Ser-121, Ser-307, Ser-314, Thr-323 and Thr-367 by phosphatase PPP2CA in an IER5-dependent manner, leading to HSF1-mediated transactivation activity. In terms of processing, sumoylated with SUMO1 and SUMO2 upon heat shock in a ERK2-dependent manner. Sumoylated by SUMO1 on Lys-298; sumoylation occurs upon heat shock and promotes its localization to nuclear stress bodies and DNA-binding activity. Phosphorylation on Ser-303 and Ser-307 is probably a prerequisite for sumoylation. Post-translationally, acetylated on Lys-118; this acetylation is decreased in a IER5-dependent manner. Acetylated on Lys-118, Lys-208 and Lys-298; these acetylations occur in a EP300-dependent manner. Acetylated on Lys-80; this acetylation inhibits DNA-binding activity upon heat shock. Deacetylated on Lys-80 by SIRT1; this deacetylation increases DNA-binding activity. Ubiquitinated by SCF(BTRC) and degraded following stimulus-dependent phosphorylation at Ser-216 by PLK1 in mitosis. Polyubiquitinated. Undergoes proteasomal degradation upon heat shock and during the attenuation and recovery phase period of the heat shock response.

The protein resides in the nucleus. The protein localises to the cytoplasm. It is found in the nucleoplasm. Its subcellular location is the perinuclear region. It localises to the cytoskeleton. The protein resides in the spindle pole. The protein localises to the microtubule organizing center. It is found in the centrosome. Its subcellular location is the chromosome. It localises to the centromere. The protein resides in the kinetochore. In terms of biological role, functions as a stress-inducible and DNA-binding transcription factor that plays a central role in the transcriptional activation of the heat shock response (HSR), leading to the expression of a large class of molecular chaperones, heat shock proteins (HSPs), that protect cells from cellular insult damage. In unstressed cells, is present in a HSP90-containing multichaperone complex that maintains it in a non-DNA-binding inactivated monomeric form. Upon exposure to heat and other stress stimuli, undergoes homotrimerization and activates HSP gene transcription through binding to site-specific heat shock elements (HSEs) present in the promoter regions of HSP genes. Upon heat shock stress, forms a chromatin-associated complex with TTC5/STRAP and p300/EP300 to stimulate HSR transcription, therefore increasing cell survival. Activation is reversible, and during the attenuation and recovery phase period of the HSR, returns to its unactivated form. Binds to inverted 5'-NGAAN-3' pentamer DNA sequences. Binds to chromatin at heat shock gene promoters. Activates transcription of transcription factor FOXR1 which in turn activates transcription of the heat shock chaperones HSPA1A and HSPA6 and the antioxidant NADPH-dependent reductase DHRS2. Also serves several other functions independently of its transcriptional activity. Involved in the repression of Ras-induced transcriptional activation of the c-fos gene in heat-stressed cells. Positively regulates pre-mRNA 3'-end processing and polyadenylation of HSP70 mRNA upon heat-stressed cells in a symplekin (SYMPK)-dependent manner. Plays a role in nuclear export of stress-induced HSP70 mRNA. Plays a role in the regulation of mitotic progression. Also plays a role as a negative regulator of non-homologous end joining (NHEJ) repair activity in a DNA damage-dependent manner. Involved in stress-induced cancer cell proliferation in a IER5-dependent manner. (Microbial infection) Plays a role in latent human immunodeficiency virus (HIV-1) transcriptional reactivation. Binds to the HIV-1 long terminal repeat promoter (LTR) to reactivate viral transcription by recruiting cellular transcriptional elongation factors, such as CDK9, CCNT1 and EP300. This is Heat shock factor protein 1 from Homo sapiens (Human).